Here is a 742-residue protein sequence, read N- to C-terminus: G2/M phase-specific E3 ubiquitin-protein ligase (742 aa).

A C2HC pre-PHD-type zinc finger spans residues 10 to 50; that stretch reads SPPCVLCGWTDNCPEKYGEKRTYVEYNLTLHNYCLLMSSGI. The segment at 78 to 127 adopts a PHD-type 1 zinc-finger fold; the sequence is LMCNICRKKGASIGCVAPKCKRSYHFPCGLQKECVFQFMEDFRSYCWEHK. A PHD-type 2; degenerate zinc finger spans residues 142–192; sequence QCTICLDLVEHLPLYSVLRSPCCKNTWFHRECLQYQALSAGIFFFRCAVCN. Residues 236-285 form a PHD-type 3 zinc finger; that stretch reads RCLCKNGRDYNKPDSKWEIKRCQSCGSRGTHLACSSIKSWEQNWECVECR. Residues 417–742 form the HECT domain; sequence KGFRQRNFRP…IRSTLRGERE (326 aa).

Its subcellular location is the nucleus. The protein localises to the nucleolus. It localises to the cytoplasm. It carries out the reaction S-ubiquitinyl-[E2 ubiquitin-conjugating enzyme]-L-cysteine + [acceptor protein]-L-lysine = [E2 ubiquitin-conjugating enzyme]-L-cysteine + N(6)-ubiquitinyl-[acceptor protein]-L-lysine.. It functions in the pathway protein modification; protein ubiquitination. Functionally, E3 ubiquitin-protein ligase which accepts ubiquitin from an E2 ubiquitin-conjugating enzyme in the form of a thioester and then directly transfers the ubiquitin to targeted substrates. Essential in early embryonic development to prevent apoptotic death. This chain is G2/M phase-specific E3 ubiquitin-protein ligase (G2E3), found in Gallus gallus (Chicken).